A 215-amino-acid chain; its full sequence is MTKTTKTMNPKFYLVLALTAVLASNAYGAVVDIDGNAMFHESYYVLPVIRGRGGGLTLAGRGGQPCPYDIVQESSEVDEGIPVKFSNWRLKVAFVPESQNLNIETDVGATICIQSTYWRVGEFDHERKQYFVVAGPKPEGFGQDSLKSFFKIEKSGEDAYKFVFCPRTCDSGNPKCSDVGIFIDELGVRRLALSDKPFLVMFKKANVTEVSSKTM.

Residues 1 to 28 (MTKTTKTMNPKFYLVLALTAVLASNAYG) form the signal peptide. Disulfide bonds link C66/C112 and C165/C176. N-linked (GlcNAc...) asparagine glycosylation is present at N206.

This sequence belongs to the protease inhibitor I3 (leguminous Kunitz-type inhibitor) family. Expressed in roots.

It is found in the endoplasmic reticulum. Functionally, exhibits Kunitz trypsin protease inhibitor activity. Involved in modulating programmed cell death (PCD) in plant-pathogen interactions. Can inhibit both serine proteases and cysteine proteases. May be involved in the modulation of the proteases that participate in the hydrolysis of dietary proteins in the gut of spider mites. The chain is Kunitz trypsin inhibitor 4 from Arabidopsis thaliana (Mouse-ear cress).